Here is a 380-residue protein sequence, read N- to C-terminus: Cytochrome b (380 aa).

The next 4 helical transmembrane spans lie at 34 to 54 (FGSLLALCLMTQILTGLLLAM), 78 to 99 (WLIRNMHANGASFFFICIYLHI), 114 to 134 (WNTGVLLLLTLMATAFVGYVL), and 179 to 199 (FFALHFLLPFMIAGLTLIHLT). The heme b site is built by His-84 and His-98. Heme b-binding residues include His-183 and His-197. His-202 provides a ligand contact to a ubiquinone. The next 4 helical transmembrane spans lie at 227-247 (LKDILGLALLLLPLTTMALFS), 289-309 (LGGVLALAASVLVLFLSPLLH), 321-341 (LSQLLFWALVANLLILTWIGS), and 348-368 (FIIIGQLASTTYFIILLILFP).

It belongs to the cytochrome b family. As to quaternary structure, the cytochrome bc1 complex contains 11 subunits: 3 respiratory subunits (MT-CYB, CYC1 and UQCRFS1), 2 core proteins (UQCRC1 and UQCRC2) and 6 low-molecular weight proteins (UQCRH/QCR6, UQCRB/QCR7, UQCRQ/QCR8, UQCR10/QCR9, UQCR11/QCR10 and a cleavage product of UQCRFS1). This cytochrome bc1 complex then forms a dimer. It depends on heme b as a cofactor.

The protein localises to the mitochondrion inner membrane. Its function is as follows. Component of the ubiquinol-cytochrome c reductase complex (complex III or cytochrome b-c1 complex) that is part of the mitochondrial respiratory chain. The b-c1 complex mediates electron transfer from ubiquinol to cytochrome c. Contributes to the generation of a proton gradient across the mitochondrial membrane that is then used for ATP synthesis. The sequence is that of Cytochrome b (MT-CYB) from Oceanodroma microsoma (Least storm petrel).